A 710-amino-acid polypeptide reads, in one-letter code: Gastrulation-defective protein 3 (710 aa).

The chain crosses the membrane as a helical span at residues 597–615 (AYYVFTVLALIISNFPTIV).

It localises to the membrane. This Caenorhabditis elegans protein is Gastrulation-defective protein 3 (gadr-3).